The sequence spans 465 residues: Hexokinase type 1 (465 aa).

The 440-residue stretch at 8–447 folds into the Hexokinase domain; sequence EEDFPEVYKV…CGVGAAIMAG (440 aa). A hexokinase small subdomain region spans residues 65-197; the sequence is TGRERGQFLA…EISVDVMGII (133 aa). Lysine 88 contributes to the ATP binding site. Residues 139–165 form a glucose-binding region; the sequence is PLGIAFAFTLKKLALDVGILVSWTKEF. The segment at 198–436 is hexokinase large subdomain; the sequence is NVGAGSLLAL…YNFEFVITQD (239 aa).

The protein belongs to the hexokinase family.

It catalyses the reaction a D-hexose + ATP = a D-hexose 6-phosphate + ADP + H(+). The catalysed reaction is D-mannose + ATP = D-mannose 6-phosphate + ADP + H(+). It carries out the reaction D-fructose + ATP = D-fructose 6-phosphate + ADP + H(+). The enzyme catalyses D-glucose + ATP = D-glucose 6-phosphate + ADP + H(+). Its pathway is carbohydrate metabolism; hexose metabolism. It participates in carbohydrate degradation; glycolysis; D-glyceraldehyde 3-phosphate and glycerone phosphate from D-glucose: step 1/4. Catalyzes the phosphorylation of various hexoses to hexose 6-phosphate. This chain is Hexokinase type 1 (Hex-t1), found in Drosophila melanogaster (Fruit fly).